A 219-amino-acid chain; its full sequence is C-8 sterol isomerase erg2 (219 aa).

A helical membrane pass occupies residues 1-21 (MKLTKFLTVFIPFIAGLIYYI).

This sequence belongs to the ERG2 family.

The protein localises to the endoplasmic reticulum membrane. The catalysed reaction is fecosterol = episterol. It participates in steroid metabolism; ergosterol biosynthesis. In terms of biological role, C-8 sterol isomerase; part of the third module of ergosterol biosynthesis pathway that includes by the late steps of the pathway. Erg2 catalyzes the reaction which results in unsaturation at C-7 in the B ring of sterols and thus converts fecosterol to episterol. The third module or late pathway involves the ergosterol synthesis itself through consecutive reactions that mainly occur in the endoplasmic reticulum (ER) membrane. Firstly, the squalene synthase erg9 catalyzes the condensation of 2 farnesyl pyrophosphate moieties to form squalene, which is the precursor of all steroids. Secondly, squalene is converted into lanosterol by the consecutive action of the squalene epoxidase erg1 and the lanosterol synthase erg7. The lanosterol 14-alpha-demethylase erg11/cyp1 catalyzes C14-demethylation of lanosterol to produce 4,4'-dimethyl cholesta-8,14,24-triene-3-beta-ol. In the next steps, a complex process involving various demethylation, reduction and desaturation reactions catalyzed by the C-14 reductase erg24 and the C-4 demethylation complex erg25-erg26-erg27 leads to the production of zymosterol. Erg28 likely functions in the C-4 demethylation complex reaction by tethering erg26 and Erg27 to the endoplasmic reticulum or to facilitate interaction between these proteins. Then, the sterol 24-C-methyltransferase erg6 catalyzes the methyl transfer from S-adenosyl-methionine to the C-24 of zymosterol to form fecosterol. The C-8 sterol isomerase erg2 catalyzes the reaction which results in unsaturation at C-7 in the B ring of sterols and thus converts fecosterol to episterol. The sterol-C5-desaturases erg31 and erg32 then catalyze the introduction of a C-5 double bond in the B ring to produce 5-dehydroepisterol. The C-22 sterol desaturase erg5 further converts 5-dehydroepisterol into ergosta-5,7,22,24(28)-tetraen-3beta-ol by forming the C-22(23) double bond in the sterol side chain. Finally, ergosta-5,7,22,24(28)-tetraen-3beta-ol is substrate of the C-24(28) sterol reductase erg4 to produce ergosterol. In the genus Schizosaccharomyces, a second route exists between lanosterol and fecosterol, via the methylation of lanosterol to eburicol by erg6, followed by C14-demethylation by erg11/cyp1 and C4-demethylation by the demethylation complex erg25-erg26-erg27. This Schizosaccharomyces pombe (strain 972 / ATCC 24843) (Fission yeast) protein is C-8 sterol isomerase erg2.